Consider the following 632-residue polypeptide: SH2B adapter protein 2 (632 aa).

Tyrosine 52 carries the phosphotyrosine modification. Serine 141 carries the post-translational modification Phosphoserine. The PH domain occupies 193-306 (DIQREGALRF…WVADIQGCVD (114 aa)). Serine 310 carries the phosphoserine modification. The tract at residues 381–409 (TLESPGGSGSDSNNTGEQGAETDPEAEPE) is disordered. A compositionally biased stretch (acidic residues) spans 400-409 (AETDPEAEPE). The region spanning 417 to 515 (WFHGTLSRVK…SADITLRSYV (99 aa)) is the SH2 domain. Disordered regions lie at residues 516–537 (RAQD…SPAC) and 558–632 (ASPS…YSFY). The segment covering 519–532 (DPPPEPGPTPPAAP) has biased composition (pro residues). 2 stretches are compositionally biased toward low complexity: residues 558 to 579 (ASPS…AASG) and 604 to 626 (EAVA…RAVE). Tyrosine 629 carries the post-translational modification Phosphotyrosine.

This sequence belongs to the SH2B adapter family. Homodimer. Interacts with KIT/c-KIT, SHC1, EPOR, PDGFR, VAV1 and VAV3. Interacts (via N-terminal region) with SHC1. Interacts (via the phosphorylated C-terminus) with GRB2. Interacts (via its SH2 domain) with EPOR, INSR and KIT. Interacts with GRB2 after B-cell antigen receptor stimulation. Interacts (via PH domain) with VAV3. Interacts with NTRK1, NTRK2 and NTRK3 (phosphorylated); after stimulation of the receptor by its extracellular ligand and subsequent autophosphorylation of the receptor. Binds INSR, GRB2, ASB6 and CAP. Insulin stimulation leads to dissociation of CAP. Binds CBS only when SH2B2/APS has become phosphorylated. INSR binding does not depend on the phosphorylation of SH2B2/APS. Tyrosine phosphorylated by JAK2, KIT and other kinases activated by B-cell receptor in response to stimulation with cytokines, IL3, IL5, PDGF, IGF1, IGF2, CSF2/GM-CSF and cross-linking of the B-cell receptor complex. In terms of tissue distribution, expressed in spleen, prostate, testis, uterus, small intestine and skeletal muscle. Among hematopoietic cell lines, expressed exclusively in B-cells. Not expressed in most tumor cell lines.

Its subcellular location is the cytoplasm. It localises to the cell membrane. Adapter protein for several members of the tyrosine kinase receptor family. Involved in multiple signaling pathways. May be involved in coupling from immunoreceptor to Ras signaling. Acts as a negative regulator of cytokine signaling in collaboration with CBL. Binds to EPOR and suppresses EPO-induced STAT5 activation, possibly through a masking effect on STAT5 docking sites in EPOR. Suppresses PDGF-induced mitogenesis. May induce cytoskeletal reorganization via interaction with VAV3. The polypeptide is SH2B adapter protein 2 (SH2B2) (Homo sapiens (Human)).